The chain runs to 211 residues: uncharacterized protein (211 aa).

Transmembrane regions (helical) follow at residues 77 to 97 (FLMF…AITI), 113 to 133 (GISV…VLIG), 152 to 172 (ILIS…NVIP), and 179 to 199 (LLTP…PLFG).

Its subcellular location is the cell membrane. This is an uncharacterized protein from Bacillus subtilis (strain 168).